Reading from the N-terminus, the 399-residue chain is Elongation factor Tu (399 aa).

One can recognise a tr-type G domain in the interval 10-204 (KPHVNIGTIG…AVDASIPEPE (195 aa)). The G1 stretch occupies residues 19 to 26 (GHVDHGKT). 19–26 (GHVDHGKT) contributes to the GTP binding site. Thr26 lines the Mg(2+) pocket. A G2 region spans residues 60 to 64 (GITIN). The interval 81–84 (DCPG) is G3. GTP is bound by residues 81–85 (DCPGH) and 136–139 (NKCD). Residues 136-139 (NKCD) are G4. A G5 region spans residues 174–176 (SGL).

It belongs to the TRAFAC class translation factor GTPase superfamily. Classic translation factor GTPase family. EF-Tu/EF-1A subfamily. Monomer.

Its subcellular location is the cytoplasm. The catalysed reaction is GTP + H2O = GDP + phosphate + H(+). In terms of biological role, GTP hydrolase that promotes the GTP-dependent binding of aminoacyl-tRNA to the A-site of ribosomes during protein biosynthesis. This chain is Elongation factor Tu, found in Prochlorococcus marinus (strain SARG / CCMP1375 / SS120).